The chain runs to 508 residues: MGLPWYRVHTVVLNDPGRLIAVHLMHTALVSGWAGSMALYEISVFDPSDPVLNPMWRQGMFVIPFMTRLGVTKSWGGWSITGESVSNPGIWSYEGVATAHILLSGALFMAAIWHWVFWDLELFRDPRTGEPALDLPKIFGIHLFLSGLLCFGFGAFHVTGLYGPGIWVSDPYGITGSVQPVEPAWGPEGFDPFNPGGIASHHIAAGILGILAGLFHLSVRPPQRLYKALRMGNVETVLSSSIAAVFWAAFVVSGTMWYGSAATPIELFGPTRYQWDQGFFQQEIEKRVQGSLASGASLSDAWAKIPEKLSFYDYIGNNPAKGGLFRAGAMNSGDGIAAGWLGHPVFTDKAGNELFVRRMPTFFETFPVLLVDKDGVVRADVPFRRAESKYSIEQVGVSVTFYGGELDGVTFNDPSTVKKYARRAQLGSVFEFDRATLQSDGVFRSSPRGWFTFGHLWFALLFFFGHIWHGARTIFRDVFGGIDPDLDDQVEFGAFQKLGDVTTRRQAV.

A run of 6 helical transmembrane segments spans residues 21-36 (AVHLMHTALVSGWAGS), 101-115 (ILLSGALFMAAIWHW), 140-156 (GIHLFLSGLLCFGFGAF), 203-218 (IAAGILGILAGLFHLS), 237-252 (VLSSSIAAVFWAAFVV), and 457-472 (WFALLFFFGHIWHGAR).

The protein belongs to the PsbB/PsbC family. PsbB subfamily. In terms of assembly, PSII is composed of 1 copy each of membrane proteins PsbA, PsbB, PsbC, PsbD, PsbE, PsbF, PsbH, PsbI, PsbJ, PsbK, PsbL, PsbM, PsbT, PsbX, PsbY, PsbZ, Psb30/Ycf12, at least 3 peripheral proteins of the oxygen-evolving complex and a large number of cofactors. It forms dimeric complexes. Binds multiple chlorophylls. PSII binds additional chlorophylls, carotenoids and specific lipids. serves as cofactor.

The protein resides in the plastid. It is found in the chloroplast thylakoid membrane. Functionally, one of the components of the core complex of photosystem II (PSII). It binds chlorophyll and helps catalyze the primary light-induced photochemical processes of PSII. PSII is a light-driven water:plastoquinone oxidoreductase, using light energy to abstract electrons from H(2)O, generating O(2) and a proton gradient subsequently used for ATP formation. The sequence is that of Photosystem II CP47 reaction center protein from Nephroselmis olivacea (Green alga).